The sequence spans 424 residues: Methylthioribose-1-phosphate isomerase (424 aa).

Catalysis depends on D281, which acts as the Proton donor.

Belongs to the eIF-2B alpha/beta/delta subunits family. MtnA subfamily.

It is found in the cytoplasm. It localises to the nucleus. The enzyme catalyses 5-(methylsulfanyl)-alpha-D-ribose 1-phosphate = 5-(methylsulfanyl)-D-ribulose 1-phosphate. It participates in amino-acid biosynthesis; L-methionine biosynthesis via salvage pathway; L-methionine from S-methyl-5-thio-alpha-D-ribose 1-phosphate: step 1/6. Functionally, catalyzes the interconversion of methylthioribose-1-phosphate (MTR-1-P) into methylthioribulose-1-phosphate (MTRu-1-P). The protein is Methylthioribose-1-phosphate isomerase of Candida dubliniensis (strain CD36 / ATCC MYA-646 / CBS 7987 / NCPF 3949 / NRRL Y-17841) (Yeast).